The following is a 158-amino-acid chain: Protein Smg homolog (158 aa).

It belongs to the Smg family.

This is Protein Smg homolog from Coxiella burnetii (strain Dugway 5J108-111).